Reading from the N-terminus, the 712-residue chain is Exocyst complex component EXO70I (712 aa).

The N-terminal stretch at 1 to 18 (MHKKQLMALLMVPQTSDS) is a signal peptide. A coiled-coil region spans residues 26–53 (LESAYSDLESLLRSSKQMEQNIETMETR). Asparagine 111 carries an N-linked (GlcNAc...) asparagine glycan.

The protein belongs to the EXO70 family. Subunit of the exocyst complex that mediates vesicle tethering during exocytosis. Interacts with VPY at the periarbuscular membrane (PAM) around the arbuscule hyphal tips. As to expression, present at low levels in non-mycorrhizal root tips.

The protein resides in the cell membrane. Component of an exocyst subcomplex specifically required for periarbuscular membrane (PAM) biogenesis during arbuscular mycorrhizal (AM) symbiosis with AM fungi (e.g. Glomus versiforme), especially critical during the early branching phase of arbuscule development; probably involved in STR and STR2 delivery into the PAM. The polypeptide is Exocyst complex component EXO70I (Medicago truncatula (Barrel medic)).